The following is a 245-amino-acid chain: tRNA pseudouridine synthase A (245 aa).

The active-site Nucleophile is the D52. Y110 lines the substrate pocket.

It belongs to the tRNA pseudouridine synthase TruA family. Homodimer.

The catalysed reaction is uridine(38/39/40) in tRNA = pseudouridine(38/39/40) in tRNA. In terms of biological role, formation of pseudouridine at positions 38, 39 and 40 in the anticodon stem and loop of transfer RNAs. This Borrelia hermsii (strain HS1 / DAH) protein is tRNA pseudouridine synthase A.